We begin with the raw amino-acid sequence, 147 residues long: Large ribosomal subunit protein uL13 (147 aa).

The interval 128-147 (PEHPHSAQQPVPYELKQVAQ) is disordered.

Belongs to the universal ribosomal protein uL13 family. As to quaternary structure, part of the 50S ribosomal subunit.

In terms of biological role, this protein is one of the early assembly proteins of the 50S ribosomal subunit, although it is not seen to bind rRNA by itself. It is important during the early stages of 50S assembly. This is Large ribosomal subunit protein uL13 from Mycobacterium bovis (strain BCG / Pasteur 1173P2).